Reading from the N-terminus, the 225-residue chain is Mitochondrial inner membrane protease ATP23 (225 aa).

His-124 provides a ligand contact to a divalent metal cation. The active site involves Glu-125. His-128 lines the a divalent metal cation pocket.

This sequence belongs to the peptidase M76 family.

The protein resides in the mitochondrion inner membrane. In terms of biological role, has a dual role in the assembly of mitochondrial ATPase. Acts as a protease that removes N-terminal residues of mitochondrial ATPase CF(0) subunit 6 at the intermembrane space side. Also involved in the correct assembly of the membrane-embedded ATPase CF(0) particle, probably mediating association of subunit 6 with the subunit 9 ring. The chain is Mitochondrial inner membrane protease ATP23 (ATP23) from Candida glabrata (strain ATCC 2001 / BCRC 20586 / JCM 3761 / NBRC 0622 / NRRL Y-65 / CBS 138) (Yeast).